Here is a 417-residue protein sequence, read N- to C-terminus: Monooxygenase cfoF (417 aa).

FAD-binding positions include 45–48 (DRDK), Arg126, and Asp327. Basic and acidic residues predominate over residues 389–399 (AHTTQLDRDQF). The disordered stretch occupies residues 389–417 (AHTTQLDRDQFTDGSGANDFLVGQQHSDK).

Belongs to the aromatic-ring hydroxylase family. KMO subfamily. FAD is required as a cofactor.

It functions in the pathway secondary metabolite biosynthesis; flavonoid biosynthesis. Monooxygenase; part of the gene cluster that mediates the biosynthesis of chlorflavonin, a fungal flavonoid with acetolactate synthase inhibitory activity. Within the pathway, cfoF is responsible for the hydroxylation of the flavonoid skeleton at position C3. The pathway begins with the PKS-NRPS hybrid synthetase cfoA that uses benzoic acid or p-hydroxybenzoic acid as a starter unit with four rounds of chain elongation using malonyl-CoA to form the chalcone skeleton. Then, a new type of chalcone isomerase, cfoK, catalyzes the conversion of the chalcone into a flavanone by a histidine-mediated oxa-Michael addition mechanism. The desaturation of flavanone to flavone is catalyzed by a new type of flavone synthase, the flavin mononucleotide (FMN)-dependent oxidoreductase cfoJ. Monooxygenases cfoF, cfoG, and P450 cfoH are responsible for the hydroxylation of the flavonoid skeleton at sites C3, C8, and C2', respectively. Like cfoF, the dehydratase cfoI plays also a role in the hydroxylation of position C3. Methyltransferases cfoB, cfoC, and cfoD then catalyze the methylation of C7-OH, C8-OH, and C3-OH, respectively. Finally, the monooxygenase cfoE is responsible for the chlorination of flavonoid at position C3'. This chain is Monooxygenase cfoF, found in Aspergillus candidus.